Here is a 305-residue protein sequence, read N- to C-terminus: tRNA pseudouridine synthase B (305 aa).

Aspartate 48 functions as the Nucleophile in the catalytic mechanism.

The protein belongs to the pseudouridine synthase TruB family. Type 1 subfamily.

It carries out the reaction uridine(55) in tRNA = pseudouridine(55) in tRNA. In terms of biological role, responsible for synthesis of pseudouridine from uracil-55 in the psi GC loop of transfer RNAs. In Pseudomonas syringae pv. syringae (strain B728a), this protein is tRNA pseudouridine synthase B.